Here is a 572-residue protein sequence, read N- to C-terminus: Mitochondrial chaperone TCM62 (572 aa).

A mitochondrion-targeting transit peptide spans 1 to 16 (MLRNCLRKLGNHQTKC). Residues 17–471 (SVKTLHTPIY…KANEPNFMTK (455 aa)) lie on the Mitochondrial matrix side of the membrane. The helical transmembrane segment at 472–488 (VGINAVLSAVILPSEVA) threads the bilayer. The Mitochondrial intermembrane portion of the chain corresponds to 489–572 (FKNAYGYNYY…VYKKPERHKA (84 aa)).

The protein belongs to the chaperonin (HSP60) family. As to quaternary structure, forms a high molecular mass protein complex of approximately 850 kDa.

It is found in the mitochondrion inner membrane. Functionally, chaperone. Required for the assembly of succinate dehydrogenase subunits. Ensures mitochondrial gene expression at elevated temperatures and prevents heat-aggregation of the ribosomal subunit VAR1. The protein is Mitochondrial chaperone TCM62 (TCM62) of Saccharomyces cerevisiae (strain ATCC 204508 / S288c) (Baker's yeast).